Here is a 204-residue protein sequence, read N- to C-terminus: Elongation factor Ts (204 aa).

Residues 87 to 90 (TDFV) are involved in Mg(2+) ion dislocation from EF-Tu.

The protein belongs to the EF-Ts family.

It is found in the cytoplasm. Associates with the EF-Tu.GDP complex and induces the exchange of GDP to GTP. It remains bound to the aminoacyl-tRNA.EF-Tu.GTP complex up to the GTP hydrolysis stage on the ribosome. The protein is Elongation factor Ts of Frankia alni (strain DSM 45986 / CECT 9034 / ACN14a).